We begin with the raw amino-acid sequence, 361 residues long: tRNA-specific 2-thiouridylase MnmA (361 aa).

ATP is bound by residues 6–13 and Leu-32; that span reads AMSGGVDS. Cys-101 acts as the Nucleophile in catalysis. A disulfide bond links Cys-101 and Cys-194. An ATP-binding site is contributed by Gly-125. Positions 144-146 are interaction with tRNA; that stretch reads KDQ. Catalysis depends on Cys-194, which acts as the Cysteine persulfide intermediate.

It belongs to the MnmA/TRMU family.

The protein resides in the cytoplasm. It carries out the reaction S-sulfanyl-L-cysteinyl-[protein] + uridine(34) in tRNA + AH2 + ATP = 2-thiouridine(34) in tRNA + L-cysteinyl-[protein] + A + AMP + diphosphate + H(+). In terms of biological role, catalyzes the 2-thiolation of uridine at the wobble position (U34) of tRNA, leading to the formation of s(2)U34. The protein is tRNA-specific 2-thiouridylase MnmA of Corynebacterium aurimucosum (strain ATCC 700975 / DSM 44827 / CIP 107346 / CN-1) (Corynebacterium nigricans).